The sequence spans 244 residues: MSAFHLETLKSLPKAEQEAALSEANRQLEEMSAEDRLKWAFDNLSGQFVLSSSFGIQAAVMLHLVTRKKADIPVILTDTGYLFPETYRFIDALTEKLDLNLQVFRAALSPAWQEARYGKLWEQGVEGIERYNDINKVEPMNRALKTLEAGTWFAGLRRDQSKSRSHLPILAIQRGVFKFLPIIDWDNRKIHYYLKEHDLPYHPLWDEGYLSVGDTHTTRKWEEGMSEEETRFFGLKRECGLHEG.

Residue Cys-239 is the Nucleophile; cysteine thiosulfonate intermediate of the active site.

The protein belongs to the PAPS reductase family. CysH subfamily.

It is found in the cytoplasm. The catalysed reaction is [thioredoxin]-disulfide + sulfite + adenosine 3',5'-bisphosphate + 2 H(+) = [thioredoxin]-dithiol + 3'-phosphoadenylyl sulfate. The protein operates within sulfur metabolism; hydrogen sulfide biosynthesis; sulfite from sulfate: step 3/3. Functionally, catalyzes the formation of sulfite from phosphoadenosine 5'-phosphosulfate (PAPS) using thioredoxin as an electron donor. The sequence is that of Phosphoadenosine 5'-phosphosulfate reductase from Zymomonas mobilis subsp. mobilis (strain ATCC 31821 / ZM4 / CP4).